The primary structure comprises 285 residues: MGYAHPEVLVSTDWVQEHLEDPKVRVLEVDEDILLYDTGHIPGAQKIDWQRDFWDPVVRDFISEEEFAKLMERLGISNDTTVVLYGDKNNWWAAYAFWFFKYNGHKDVRLMNGGRQKWVEEGRPLTTEVPSYPPGRYEVPYRDESIRAYRDDVLEHIIKVKEGKGALVDVRSPQEYRGELTHMPDYPQEGALRAGHIPGAKNIPWAKAVNPDGTFKSAEELRALYEPLGITKDKDIVVYCRIAERSSHSWFVLKYLLGYPHVKNYDGSWTEWGNLVGVPIAKGEE.

Rhodanese domains lie at 20–127 (EDPK…PLTT) and 161–281 (KEGK…VPIA). Cysteine persulfide is present on Cys240.

In terms of processing, cys-240 can accept a sulfur atom as persulfide forms from cysteine desulfurases IscS and SufS.

It functions in the pathway tRNA modification. Its function is as follows. Required for the efficient 2-thiolation of 5-methyluridine residue at position 54 in the T loop of tRNAs, leading to 5-methyl-2-thiouridine (m(5)s(2)U or s(2)T). TtuD is a sulfur carrier protein that has a role to direct sulfur flow from cysteine desulfurases to m(5)s(2)U synthesis in vivo. It enhances the cysteine desulfurase activity of IscS and SufS, as well as the formation of thiocarboxylated TtuB (TtuB-COSH) in the presence of these desulfurases. This Thermus thermophilus (strain ATCC BAA-163 / DSM 7039 / HB27) protein is Sulfur carrier protein TtuD.